We begin with the raw amino-acid sequence, 448 residues long: Dual specificity mitogen-activated protein kinase kinase 5 (448 aa).

Residues 18–25 form an interaction with MAPK7 region; the sequence is VIRIKIPN. Residues 18-109 form the PB1 domain; it reads VIRIKIPNSG…EPLQIFPRAC (92 aa). The interval 64–68 is interaction with MAP3K2/MAP3K3; sequence DEDGD. A disordered region spans residues 116–144; the sequence is NIHGLKVNTRAGPSQHTSPVVSDSLPSNS. The interval 117 to 131 is interaction with MAPK7; the sequence is IHGLKVNTRAGPSQH. The span at 126-144 shows a compositional bias: polar residues; sequence AGPSQHTSPVVSDSLPSNS. The 254-residue stretch at 166–419 folds into the Protein kinase domain; that stretch reads IRYRDTLGHG…PEELMGHPFI (254 aa). ATP-binding positions include 172–180 and lysine 195; that span reads LGHGNGGTV. The active-site Proton acceptor is the aspartate 283. Residue serine 311 is modified to Phosphoserine. Threonine 315 is subject to Phosphothreonine.

This sequence belongs to the protein kinase superfamily. STE Ser/Thr protein kinase family. MAP kinase kinase subfamily. Interacts with PARD6A, MAP3K3 and MAPK7. Forms a complex with SQSTM1 and PRKCZ or PRKCI. It depends on Mg(2+) as a cofactor. Post-translationally, activated by phosphorylation on Ser/Thr by MAP kinase kinase kinases.

It is found in the cytoplasm. The enzyme catalyses L-seryl-[protein] + ATP = O-phospho-L-seryl-[protein] + ADP + H(+). It catalyses the reaction L-threonyl-[protein] + ATP = O-phospho-L-threonyl-[protein] + ADP + H(+). The catalysed reaction is L-tyrosyl-[protein] + ATP = O-phospho-L-tyrosyl-[protein] + ADP + H(+). Acts as a scaffold for the formation of a ternary MAP3K2/MAP3K3-MAP3K5-MAPK7 signaling complex. Activation of this pathway appears to play a critical role in protecting cells from stress-induced apoptosis, neuronal survival and cardiac development and angiogenesis. As part of the MAPK/ERK signaling pathway, acts as a negative regulator of apoptosis in cardiomyocytes via promotion of STUB1/CHIP-mediated ubiquitination and degradation of ICER-type isoforms of CREM. This chain is Dual specificity mitogen-activated protein kinase kinase 5 (Map2k5), found in Mus musculus (Mouse).